Here is a 1225-residue protein sequence, read N- to C-terminus: MMKSFGSIRSIFMHADGVDWMLMALGLIGAVGDGFITPIIFFICSKLLNNVGGSSFDDETFMQTVAKNAVALVYVACASWVICFIEGYCWTRTGERQAAKMREKYLKAVLRQDVGYFDLHVTSTSDVITSVSSDSLVIQDFLSEKLPNFLMNTSAFVASYIVGFLLLWRLTIVGFPFIILLLIPGLMYGRALIRISMKIREEYNEAGSIAEQVISSVRTVYAFGSEKKMIEKFSTALQGSVKLGLRQGLAKGIAIGSNGITYAIWGFLTWYGSRMVMNHGSKGGTVSSVIVCVTFGGTSLGQSLSNLKYFSEAFVVGERIMKVINRVPGIDSDNLEGQILEKTRGEVEFNHVKFTYPSRPETPIFDDLCLRVPSGKTVALVGGSGSGKSTVISLLQRFYDPIAGEILIDGLPINKLQVKWLRSQMGLVSQEPVLFATSIKENILFGKEDASMDEVVEAAKASNAHSFISQFPNSYQTQVGERGVQLSGGQKQRIAIARAIIKSPIILLLDEATSALDSESERVVQEALDNASIGRTTIVIAHRLSTIRNADVICVVHNGRIIETGSHEELLEKLDGQYTSLVRLQQVDNKESDHISVEEGQASSLSKDLKYSPKEFIHSTSSNIVRDFPNLSPKDGKSLVPSFKRLMSMNRPEWKHALYGCLGAALFGAVQPIYSYSSGSMVSVYFLASHDQIKEKTRIYVLLFVGLALFTFLSNISQHYGFAYMGEYLTKRIRERMLGKILTFEVNWFDKDENSSGAICSRLAKDANMVRSLVGDRMSLLVQTISAVSITCAIGLVISWRFSIVMMSVQPVIVVCFYTQRVLLKSMSRNAIKGQDESSKLAAEAVSNIRTITAFSSQERIINLLKMVQEGPRKDSARQSWLAGIMLGTSQSLITCVSALNFWYGGKLIADGKMMSKEFLEIFLIFASTGRVIAEAGTMTKDLVKGSDAVASVFAVLDRNTTIEPENPDGYVPKKVKGQISFSNVDFAYPTRPDVIIFQNFSIDIEDGKSTAIVGPSGSGKSTIISLIERFYDPLKGIVKIDGRDIRSCHLRSLRQHIALVSQEPTLFAGTIRENIMYGGASNKIDESEIIEAAKAANAHDFITSLSNGYDTCCGDRGVQLSGGQKQRIAIARAVLKNPSVLLLDEATSALDSQSESVVQDALERLMVGRTSVVIAHRLSTIQKCDTIAVLENGAVVECGNHSSLLAKGPKGAYFSLVSLQRTLF.

Transmembrane regions (helical) follow at residues M23 to I43, V70 to W90, L146 to W168, I172 to R194, G252 to G272, and G284 to L304. Residues M23–E312 form the ABC transmembrane type-1 1 domain. Residues V347–R583 enclose the ABC transporter 1 domain. G382–S389 is an ATP binding site. N530 carries an N-linked (GlcNAc...) asparagine glycan. The next 2 membrane-spanning stretches (helical) occupy residues A657–S677 and I699–H719. The region spanning A657–K945 is the ABC transmembrane type-1 2 domain. N-linked (GlcNAc...) asparagine glycosylation is present at N754. 4 consecutive transmembrane segments (helical) span residues L780–W800, I804–L824, S880–L900, and F919–M939. Residues N960 and N1000 are each glycosylated (N-linked (GlcNAc...) asparagine). The region spanning I980–V1218 is the ABC transporter 2 domain. G1015 to S1022 contributes to the ATP binding site. N1201 is a glycosylation site (N-linked (GlcNAc...) asparagine).

This sequence belongs to the ABC transporter superfamily. ABCB family. Multidrug resistance exporter (TC 3.A.1.201) subfamily.

The protein resides in the membrane. The chain is ABC transporter B family member 18 (ABCB18) from Arabidopsis thaliana (Mouse-ear cress).